A 223-amino-acid polypeptide reads, in one-letter code: Deoxyribose-phosphate aldolase (223 aa).

Asp-89 serves as the catalytic Proton donor/acceptor. Lys-152 serves as the catalytic Schiff-base intermediate with acetaldehyde. The active-site Proton donor/acceptor is Lys-181.

It belongs to the DeoC/FbaB aldolase family. DeoC type 1 subfamily.

It localises to the cytoplasm. It catalyses the reaction 2-deoxy-D-ribose 5-phosphate = D-glyceraldehyde 3-phosphate + acetaldehyde. Its pathway is carbohydrate degradation; 2-deoxy-D-ribose 1-phosphate degradation; D-glyceraldehyde 3-phosphate and acetaldehyde from 2-deoxy-alpha-D-ribose 1-phosphate: step 2/2. Its function is as follows. Catalyzes a reversible aldol reaction between acetaldehyde and D-glyceraldehyde 3-phosphate to generate 2-deoxy-D-ribose 5-phosphate. In Listeria monocytogenes serotype 4b (strain CLIP80459), this protein is Deoxyribose-phosphate aldolase.